A 259-amino-acid polypeptide reads, in one-letter code: Trans-4-hydroxycyclohexanecarboxylate dehydrogenase (259 aa).

Positions 20, 22, 41, 73, 74, 100, 164, 168, 197, 199, and 202 each coordinate NAD(+). Tyrosine 164 functions as the Proton acceptor in the catalytic mechanism.

It belongs to the short-chain dehydrogenases/reductases (SDR) family. As to quaternary structure, homodimer. Homotetramer.

It catalyses the reaction trans-4-hydroxycyclohexane-1-carboxylate + NAD(+) = 4-oxocyclohexane-1-carboxylate + NADH + H(+). Its activity is regulated as follows. Strongly inhibited by N-bromosuccinimide. Not inhibited by sulfhydryl reagents, such as iodoacetic acid, iodoacetamide, N-ethylmaleimide and p-hydroxymercuribenzoic acid. Its function is as follows. Dehydrogenase involved in a cyclohexanecarboxylate (CHCA) degradation pathway. Catalyzes the NAD(+)-dependent dehydrogenation of trans-4-hydroxycyclohexanecarboxylate (trans-4-hydroxyCHCA) to form 4-oxocyclohexanecarboxylate (4-oxoCHCA). Is highly specific for the trans-4-hydroxy derivative and shows only weak activity with cis-4-hydroxyCHCA. Can also catalyze the reverse reaction (4-oxoCHCA reduction) with a higher catalytic efficiency. In the reverse reaction, is highly specific for 4-oxoCHCA and cannot use either the 2-oxo or the 3-oxo homolog as substrate. Cannot use NADP(+). This chain is Trans-4-hydroxycyclohexanecarboxylate dehydrogenase, found in Sinomonas cyclohexanicum (Corynebacterium cyclohexanicum).